The following is a 122-amino-acid chain: Large ribosomal subunit protein bL12 (122 aa).

This sequence belongs to the bacterial ribosomal protein bL12 family. Homodimer. Part of the ribosomal stalk of the 50S ribosomal subunit. Forms a multimeric L10(L12)X complex, where L10 forms an elongated spine to which 2 to 4 L12 dimers bind in a sequential fashion. Binds GTP-bound translation factors.

Functionally, forms part of the ribosomal stalk which helps the ribosome interact with GTP-bound translation factors. Is thus essential for accurate translation. The protein is Large ribosomal subunit protein bL12 of Mycoplasma pneumoniae (strain ATCC 29342 / M129 / Subtype 1) (Mycoplasmoides pneumoniae).